The chain runs to 618 residues: Dihydroxy-acid dehydratase (618 aa).

Residue aspartate 81 coordinates Mg(2+). Cysteine 122 contacts [2Fe-2S] cluster. Aspartate 123 and lysine 124 together coordinate Mg(2+). Lysine 124 is modified (N6-carboxylysine). A [2Fe-2S] cluster-binding site is contributed by cysteine 195. Residue glutamate 490 coordinates Mg(2+). The active-site Proton acceptor is the serine 516.

It belongs to the IlvD/Edd family. Homodimer. [2Fe-2S] cluster is required as a cofactor. The cofactor is Mg(2+).

The enzyme catalyses (2R)-2,3-dihydroxy-3-methylbutanoate = 3-methyl-2-oxobutanoate + H2O. The catalysed reaction is (2R,3R)-2,3-dihydroxy-3-methylpentanoate = (S)-3-methyl-2-oxopentanoate + H2O. Its pathway is amino-acid biosynthesis; L-isoleucine biosynthesis; L-isoleucine from 2-oxobutanoate: step 3/4. It participates in amino-acid biosynthesis; L-valine biosynthesis; L-valine from pyruvate: step 3/4. In terms of biological role, functions in the biosynthesis of branched-chain amino acids. Catalyzes the dehydration of (2R,3R)-2,3-dihydroxy-3-methylpentanoate (2,3-dihydroxy-3-methylvalerate) into 2-oxo-3-methylpentanoate (2-oxo-3-methylvalerate) and of (2R)-2,3-dihydroxy-3-methylbutanoate (2,3-dihydroxyisovalerate) into 2-oxo-3-methylbutanoate (2-oxoisovalerate), the penultimate precursor to L-isoleucine and L-valine, respectively. This Gluconobacter oxydans (strain 621H) (Gluconobacter suboxydans) protein is Dihydroxy-acid dehydratase.